A 375-amino-acid chain; its full sequence is uncharacterized protein (375 aa).

The first 20 residues, 1-20 (MKNKLFIILIIFIILKIVIC), serve as a signal peptide directing secretion. The Extracellular segment spans residues 21 to 335 (QNTTPSKLIP…EKQVERKITP (315 aa)). Over residues 30–42 (PQQQQKQKQQQTQ) the composition is skewed to low complexity. Disordered regions lie at residues 30–74 (PQQQ…QPQQ) and 113–253 (SQNV…PHNH). Over residues 43–53 (PHHHHHHHQQH) the composition is skewed to basic residues. A compositionally biased stretch (low complexity) spans 54-74 (QQHQQQHQPNQQIKQQQQPQQ). The span at 120–151 (PPHHTQQRVPHHHGPNGAPHHHGPNGAPHHHG) shows a compositional bias: basic residues. Residues 168 to 180 (GHNTQGHVQTNHV) are compositionally biased toward polar residues. Residues 181-220 (NNINKNNINNNNNNNNNNNNNNNNNNNNNINDNKNIRNNI) show a composition bias toward low complexity. The helical transmembrane segment at 336 to 356 (IMVLYILLASTMVIQLFIMVF) threads the bilayer. Topologically, residues 357-375 (KQVKHIREINAKTTMESLL) are cytoplasmic.

It localises to the membrane. This is an uncharacterized protein from Dictyostelium discoideum (Social amoeba).